A 416-amino-acid chain; its full sequence is MRAALLTLAFTALAAAADDATTTVGFFGGGEWENSNDDDSLPLIPSYTSIGASVVDVNAVETVLAISCLEGAATESCSINDPWTMTQGISSFSWYAEYTAFDWNPPVTATLDYNCAYENYTLSATCTYSMSYSGSSDGAETSTSFSTETSWDSVATYAALEVTGGLDKFNQPEATETPEGGAGFAGPIQAMVTAAPVLAAGLLASHASGAWRKGKILLIKPFKGILPRLARLEASVKSPNPYRNEPLTPNLDIRAPSSGQCNASLYTRHHPGCFDDDIDSLGQVVLSSQVLGVFFNRLCRVEFVCPDAQFACRECQPVFVDIHCNDVPSTKLPCCRGRKQTNRPCPKNKHILAWLELCKAEAMHRDSKGLKDNAFVKPYVVGELVAEVPRQAEKGRQRAMDNIARSRNCGKGHVRT.

The N-terminal stretch at 1–16 (MRAALLTLAFTALAAA) is a signal peptide. N-linked (GlcNAc...) asparagine glycosylation is found at N119 and N262.

Functionally, part of the gene cluster that mediates the biosynthesis of notoamide, a fungal indole alkaloid that belongs to a family of natural products containing a characteristic bicyclo[2.2.2]diazaoctane core. The first step of notoamide biosynthesis involves coupling of L-proline and L-tryptophan by the bimodular NRPS notE', to produce cyclo-L-tryptophan-L-proline called brevianamide F. The reverse prenyltransferase notF' then acts as a deoxybrevianamide E synthase and converts brevianamide F to deoxybrevianamide E via reverse prenylation at C-2 of the indole ring leading to the bicyclo[2.2.2]diazaoctane core. Deoxybrevianamide E is further hydroxylated at C-6 of the indole ring, likely catalyzed by the cytochrome P450 monooxygenase notG', to yield 6-hydroxy-deoxybrevianamide E. 6-hydroxy-deoxybrevianamide E is a specific substrate of the prenyltransferase notC' for normal prenylation at C-7 to produce 6-hydroxy-7-prenyl-deoxybrevianamide, also called notoamide S. As the proposed pivotal branching point in notoamide biosynthesis, notoamide S can be diverted to notoamide E through an oxidative pyran ring closure putatively catalyzed by either notH' cytochrome P450 monooxygenase or the notD' FAD-linked oxidoreductase. This step would be followed by an indole 2,3-epoxidation-initiated pinacol-like rearrangement catalyzed by the notB' FAD-dependent monooxygenase leading to the formation of notoamide C and notoamide D. On the other hand notoamide S is converted to notoamide T by notH' (or notD'), a bifunctional oxidase that also functions as the intramolecular Diels-Alderase responsible for generation of (-)-notoamide T. To generate antipodal (+)-notoaminide T, notH (or notD) in Aspergillus strain MF297-2 is expected to catalyze a Diels-Alder reaction leading to the opposite stereochemistry. The remaining oxidoreductase notD' (or notH') likely catalyzes the oxidative pyran ring formation to yield (-)-stephacidin A. The FAD-dependent monooxygenase notI' is highly similar to notB' and is predicted to catalyze a similar conversion from (-)-stephacidin A to (+)-notoamide B via the 2,3-epoxidation of (-)-stephacidin A followed by a pinacol-type rearrangement. Finally, it remains unclear which enzyme could be responsible for the final hydroxylation steps leading to notoamide A and sclerotiamide. The function of notN' in the notoamide biosynthesis has not been determined yet. In Aspergillus versicolor, this protein is Notoamide biosynthesis cluster protein N'.